The primary structure comprises 299 residues: Tyrosine recombinase XerC (299 aa).

The 85-residue stretch at 1-85 (MQNELDAYFE…SVRGLYRYLN (85 aa)) folds into the Core-binding (CB) domain. Residues 106–285 (RLPRLLDTDR…DFQHLAKVYD (180 aa)) enclose the Tyr recombinase domain. Active-site residues include R146, K170, H237, R240, and H263. The active-site O-(3'-phospho-DNA)-tyrosine intermediate is Y272.

This sequence belongs to the 'phage' integrase family. XerC subfamily. As to quaternary structure, forms a cyclic heterotetrameric complex composed of two molecules of XerC and two molecules of XerD.

The protein localises to the cytoplasm. In terms of biological role, site-specific tyrosine recombinase, which acts by catalyzing the cutting and rejoining of the recombining DNA molecules. The XerC-XerD complex is essential to convert dimers of the bacterial chromosome into monomers to permit their segregation at cell division. It also contributes to the segregational stability of plasmids. This is Tyrosine recombinase XerC from Stutzerimonas stutzeri (strain A1501) (Pseudomonas stutzeri).